Reading from the N-terminus, the 72-residue chain is Inner membrane protein YmgF (72 aa).

Residues 1 to 9 lie on the Cytoplasmic side of the membrane; that stretch reads MNNSNNLDY. The helical transmembrane segment at 10–30 threads the bilayer; that stretch reads FTLYIIFSIAFMLITLLVILI. At 31–34 the chain is on the periplasmic side; the sequence is AKPS. Residues 35 to 55 form a helical membrane-spanning segment; sequence TGLGEVLVTINLLNALVWLAI. The Cytoplasmic segment spans residues 56–72; it reads NLVNRLRERLVNHRDQQ.

Interacts with FtsL, FtsQ, FtsI, FtsN, and probably many other cell division proteins.

The protein localises to the cell inner membrane. Its function is as follows. Could be involved in cell division. May participate in the stabilization of the cell divisome under specific conditions. The polypeptide is Inner membrane protein YmgF (ymgF) (Escherichia coli (strain K12)).